We begin with the raw amino-acid sequence, 652 residues long: ATP-binding cassette sub-family G member 5 (652 aa).

Residues 1 to 30 (MSELPFLSPEGARGPHNNRGSQSSLEEGSV) are disordered. The Cytoplasmic segment spans residues 1 to 384 (MSELPFLSPE…RVTRNLMRNK (384 aa)). The segment covering 18-30 (NRGSQSSLEEGSV) has biased composition (polar residues). In terms of domain architecture, ABC transporter spans 39–294 (LGVLNVSFSV…FNNCGYPCPE (256 aa)). Position 87–94 (87–94 (GSSGSGKT)) interacts with ATP. Residues 385–405 (QVVIMRLVQNLIMGLFLIFYL) traverse the membrane as a helical segment. The region spanning 389–646 (MRLVQNLIMG…ILGMVVFKVR (258 aa)) is the ABC transmembrane type-2 domain. At 406-422 (LRVQNNMLKGAVQDRVG) the chain is on the extracellular side. Residues 423–443 (LLYQLVGATPYTGMLNAVNLF) form a helical membrane-spanning segment. Topologically, residues 444 to 468 (PMLRAVSDQESQDGLYQKWQMLLAY) are cytoplasmic. The helical transmembrane segment at 469 to 490 (VLHALPFSIVATVIFSSVCYWT) threads the bilayer. Residues 491 to 501 (LGLYPEVARFG) are Extracellular-facing. A helical membrane pass occupies residues 502–522 (YFSAALLAPHLIGEFLTLVLL). The Cytoplasmic segment spans residues 523 to 529 (GMVQNPN). The helical transmembrane segment at 530 to 550 (IVNSIVALLSISGLLIGSGFI) threads the bilayer. Residues 551 to 624 (RNIEEMPIPL…PGATSRFTTN (74 aa)) lie on the Extracellular side of the membrane. N-linked (GlcNAc...) asparagine glycosylation is found at Asn-585 and Asn-592. Residues 625–645 (FLILYSFIPTLVILGMVVFKV) traverse the membrane as a helical segment. The Cytoplasmic portion of the chain corresponds to 646–652 (RDYLISR).

This sequence belongs to the ABC transporter superfamily. ABCG family. Eye pigment precursor importer (TC 3.A.1.204) subfamily. In terms of assembly, heterodimer with ABCG8. It depends on Mg(2+) as a cofactor. N-glycosylated. N-glycosylation is important for efficient export out of the endoplasmic reticulum. Detected in liver (at protein level). Expressed only in liver and intestine.

It is found in the cell membrane. Its subcellular location is the apical cell membrane. It carries out the reaction cholesterol(in) + ATP + H2O = cholesterol(out) + ADP + phosphate + H(+). It catalyses the reaction sitosterol(in) + ATP + H2O = sitosterol(out) + ADP + phosphate + H(+). ABCG5 and ABCG8 form an obligate heterodimer that mediates Mg(2+)- and ATP-dependent sterol transport across the cell membrane. Plays an essential role in the selective transport of dietary plant sterols and cholesterol in and out of the enterocytes and in the selective sterol excretion by the liver into bile. Required for normal sterol homeostasis. The heterodimer with ABCG8 has ATPase activity. In Rattus norvegicus (Rat), this protein is ATP-binding cassette sub-family G member 5.